Consider the following 278-residue polypeptide: tRNA (guanine-N(7)-)-methyltransferase (278 aa).

S-adenosyl-L-methionine is bound by residues G63, 86 to 87 (EL), 119 to 120 (NA), and L139. D142 is a catalytic residue. Residue 217–219 (TEE) coordinates S-adenosyl-L-methionine. The tract at residues 259 to 278 (IDSTTTTTTSTATITEVESK) is disordered. Positions 261-278 (STTTTTTSTATITEVESK) are enriched in low complexity.

It belongs to the class I-like SAM-binding methyltransferase superfamily. TrmB family.

Its subcellular location is the nucleus. The catalysed reaction is guanosine(46) in tRNA + S-adenosyl-L-methionine = N(7)-methylguanosine(46) in tRNA + S-adenosyl-L-homocysteine. It functions in the pathway tRNA modification; N(7)-methylguanine-tRNA biosynthesis. Functionally, catalyzes the formation of N(7)-methylguanine at position 46 (m7G46) in tRNA. The protein is tRNA (guanine-N(7)-)-methyltransferase (mettl1) of Dictyostelium discoideum (Social amoeba).